Reading from the N-terminus, the 460-residue chain is EPD1-interacting receptor-like cytoplasmic serine/threonine-protein kinase 5D (460 aa).

The region spanning 83-364 is the Protein kinase domain; that stretch reads FSSANFLGEG…DVVNILEPLL (282 aa). Residues 89 to 97 and Lys118 contribute to the ATP site; that span reads LGEGGFGPV. Tyr163 and Tyr165 each carry phosphotyrosine. The Proton acceptor role is filled by Asp213.

This sequence belongs to the protein kinase superfamily. Ser/Thr protein kinase family. As to quaternary structure, interacts with the V.dahliae elicitor EPD1 (AC G2WWH6). In terms of processing, phosphorylated at Tyr-163 and Tyr-165 in the presence of pathogen-associated molecular patterns (PAMPs); this triggers the expression of pathogenesis-related genes. In terms of tissue distribution, mostly expressed in roots and, to a lesser extent, in leaves.

The protein resides in the cell membrane. It carries out the reaction L-seryl-[protein] + ATP = O-phospho-L-seryl-[protein] + ADP + H(+). The enzyme catalyses L-threonyl-[protein] + ATP = O-phospho-L-threonyl-[protein] + ADP + H(+). Functionally, required for pathogen-associated molecular pattern (PAMP, e.g. chitin and flg22)-triggered immunity (PTI) involving reactive oxygen species (ROS) accumulation and triggering plant defense, including defense-related gene expression (e.g. PR1 and LOX). Ensures specific recognition of the EPD1 effector of Verticillium dahliae, resulting in a hypersensitive response known as effector-triggered immunity (ETI), characterized by the activation of programmed cell death to limit infection by the pathogen. Priming plants with the incompatible pathogen V.dahliae leads to an increased resistance to compatible pathogens, as a result of systemic acquired resistance (SAR). This Gossypium barbadense (Sea Island cotton) protein is EPD1-interacting receptor-like cytoplasmic serine/threonine-protein kinase 5D.